The primary structure comprises 112 residues: Large ribosomal subunit protein uL22 (112 aa).

The protein belongs to the universal ribosomal protein uL22 family. In terms of assembly, part of the 50S ribosomal subunit.

This protein binds specifically to 23S rRNA; its binding is stimulated by other ribosomal proteins, e.g. L4, L17, and L20. It is important during the early stages of 50S assembly. It makes multiple contacts with different domains of the 23S rRNA in the assembled 50S subunit and ribosome. In terms of biological role, the globular domain of the protein is located near the polypeptide exit tunnel on the outside of the subunit, while an extended beta-hairpin is found that lines the wall of the exit tunnel in the center of the 70S ribosome. This Nitratidesulfovibrio vulgaris (strain DSM 19637 / Miyazaki F) (Desulfovibrio vulgaris) protein is Large ribosomal subunit protein uL22.